A 39-amino-acid chain; its full sequence is Beta-theraphotoxin-Cm2a (39 aa).

3 disulfides stabilise this stretch: Cys7/Cys21, Cys14/Cys26, and Cys20/Cys33. Phenylalanine amide is present on Phe39.

In terms of tissue distribution, expressed by the venom gland.

The protein resides in the secreted. In terms of biological role, inhibits mammalian voltage-gated sodium channel subtypes Nav1.5/SCN5A and Nav1.8/SCN10A by shifting the voltage dependence of channel activation to more depolarized potentials and by blocking the inward component of the sodium current. In vivo, this toxin causes erect, elevated tail, initial partial ataxia, followed by recovery over approximately 1 hour after injection and the progressive development of shaking. Although paralysis subsides, the body tremors never cease and persist until the end of the experiment. This is Beta-theraphotoxin-Cm2a from Ceratogyrus marshalli (Straighthorned baboon tarantula).